A 64-amino-acid chain; its full sequence is Translational regulator CsrA 1 (64 aa).

This sequence belongs to the CsrA/RsmA family. In terms of assembly, homodimer; the beta-strands of each monomer intercalate to form a hydrophobic core, while the alpha-helices form wings that extend away from the core.

It localises to the cytoplasm. Its function is as follows. A key translational regulator that binds mRNA to regulate translation initiation and/or mRNA stability. Mediates global changes in gene expression, shifting from rapid growth to stress survival by linking envelope stress, the stringent response and the catabolite repression systems. Usually binds in the 5'-UTR; binding at or near the Shine-Dalgarno sequence prevents ribosome-binding, repressing translation, binding elsewhere in the 5'-UTR can activate translation and/or stabilize the mRNA. Its function is antagonized by small RNA(s). The sequence is that of Translational regulator CsrA 1 from Pseudomonas syringae pv. tomato (strain ATCC BAA-871 / DC3000).